A 110-amino-acid polypeptide reads, in one-letter code: uncharacterized protein (110 aa).

Transmembrane regions (helical) follow at residues 21-41 (IQLALANFFAISCLWLKPQIC) and 63-83 (PSMIHFLPLISLTFAFSIIVV).

It is found in the membrane. This is an uncharacterized protein from Saccharomyces cerevisiae (strain ATCC 204508 / S288c) (Baker's yeast).